The following is a 210-amino-acid chain: Probable transcriptional regulator ycf29 (210 aa).

A Response regulatory domain is found at 3–119 (NILILDTDIG…ELVVIIEGVL (117 aa)). The residue at position 52 (D52) is a 4-aspartylphosphate. Positions 142–207 (SNNLKINFTP…ELVKYALENN (66 aa)) constitute an HTH luxR-type domain.

The protein resides in the plastid. The protein localises to the cyanelle. The polypeptide is Probable transcriptional regulator ycf29 (ycf29) (Cyanophora paradoxa).